The chain runs to 129 residues: Fluoride-specific ion channel FluC (129 aa).

The next 4 membrane-spanning stretches (helical) occupy residues 10-30 (LLVG…ALAF), 35-55 (PGFP…IGFL), 71-91 (LFLV…MFEG), and 105-125 (LYLA…IIAA). Na(+) is bound by residues Gly79 and Thr82.

The protein belongs to the fluoride channel Fluc/FEX (TC 1.A.43) family.

It is found in the cell inner membrane. The enzyme catalyses fluoride(in) = fluoride(out). With respect to regulation, na(+) is not transported, but it plays an essential structural role and its presence is essential for fluoride channel function. Fluoride-specific ion channel. Important for reducing fluoride concentration in the cell, thus reducing its toxicity. The sequence is that of Fluoride-specific ion channel FluC from Chlorobium luteolum (strain DSM 273 / BCRC 81028 / 2530) (Pelodictyon luteolum).